The sequence spans 543 residues: Putative cysteine ligase BshC (543 aa).

Residues 419-440 (DEKNNDNIDEVVEEVKAQISDI) adopt a coiled-coil conformation.

This sequence belongs to the BshC family.

Involved in bacillithiol (BSH) biosynthesis. May catalyze the last step of the pathway, the addition of cysteine to glucosamine malate (GlcN-Mal) to generate BSH. This is Putative cysteine ligase BshC from Oceanobacillus iheyensis (strain DSM 14371 / CIP 107618 / JCM 11309 / KCTC 3954 / HTE831).